The following is a 274-amino-acid chain: Orotidine 5'-phosphate decarboxylase (274 aa).

The segment covering 1 to 15 (MSAGRRSSGGRSAAA) has biased composition (low complexity). Residues 1-21 (MSAGRRSSGGRSAAAPRFTPP) are disordered. Residues D32, K54, 99-108 (DLKLHDIPAT), T154, R215, Q224, G244, and R245 each bind substrate. K101 functions as the Proton donor in the catalytic mechanism.

This sequence belongs to the OMP decarboxylase family. Type 1 subfamily. In terms of assembly, homodimer.

It carries out the reaction orotidine 5'-phosphate + H(+) = UMP + CO2. It functions in the pathway pyrimidine metabolism; UMP biosynthesis via de novo pathway; UMP from orotate: step 2/2. In terms of biological role, catalyzes the decarboxylation of orotidine 5'-monophosphate (OMP) to uridine 5'-monophosphate (UMP). The chain is Orotidine 5'-phosphate decarboxylase from Frankia casuarinae (strain DSM 45818 / CECT 9043 / HFP020203 / CcI3).